Here is a 215-residue protein sequence, read N- to C-terminus: 3-demethoxyubiquinol 3-hydroxylase (215 aa).

Fe cation is bound by residues E64, E94, H97, E146, E178, and H181.

Belongs to the COQ7 family. Fe cation serves as cofactor.

The protein resides in the cell membrane. The catalysed reaction is a 5-methoxy-2-methyl-3-(all-trans-polyprenyl)benzene-1,4-diol + AH2 + O2 = a 3-demethylubiquinol + A + H2O. It functions in the pathway cofactor biosynthesis; ubiquinone biosynthesis. In terms of biological role, catalyzes the hydroxylation of 2-nonaprenyl-3-methyl-6-methoxy-1,4-benzoquinol during ubiquinone biosynthesis. The chain is 3-demethoxyubiquinol 3-hydroxylase from Coxiella burnetii (strain RSA 331 / Henzerling II).